We begin with the raw amino-acid sequence, 200 residues long: Large ribosomal subunit protein uL4 (200 aa).

The tract at residues 43 to 71 (RAQKTRAEVSGSGKKPWRQKGTGRARSGD) is disordered.

Belongs to the universal ribosomal protein uL4 family. Part of the 50S ribosomal subunit.

In terms of biological role, one of the primary rRNA binding proteins, this protein initially binds near the 5'-end of the 23S rRNA. It is important during the early stages of 50S assembly. It makes multiple contacts with different domains of the 23S rRNA in the assembled 50S subunit and ribosome. Its function is as follows. Forms part of the polypeptide exit tunnel. The chain is Large ribosomal subunit protein uL4 from Histophilus somni (strain 129Pt) (Haemophilus somnus).